The primary structure comprises 83 residues: Apolipoprotein C-I, acidic form (83 aa).

Residues 1–26 (MRLFLSLPVLVVVLSMVLEGPAPAQG) form the signal peptide.

Belongs to the apolipoprotein C1 family.

The protein resides in the secreted. This chain is Apolipoprotein C-I, acidic form (APOC1A), found in Gorilla gorilla gorilla (Western lowland gorilla).